Reading from the N-terminus, the 690-residue chain is Protein-glutamine gamma-glutamyltransferase 2 (690 aa).

At Ala2 the chain carries N-acetylalanine. Intrachain disulfides connect Cys230-Cys370 and Cys370-Cys371. Active-site residues include Cys277, His335, and Asp358. Asn398, Asp400, Glu436, Glu446, and Glu451 together coordinate Ca(2+). Lys467 is modified (N6-acetyllysine). Residue 479 to 486 (RIRVGQNM) participates in GTP binding. Position 542 (Glu542) interacts with Ca(2+). 583 to 586 (RDIY) contributes to the GTP binding site. An Isoglutamyl lysine isopeptide (Gln-Lys) (interchain with K-?) cross-link involves residue Gln636.

Belongs to the transglutaminase superfamily. Transglutaminase family. As to quaternary structure, monomer. Interacts with phospholipase C; promoting alpha-1 adrenergic receptor signaling. Interacts with PLCD1. It depends on Ca(2+) as a cofactor. In terms of processing, disulfide bond formation inactivates the calcium-dependent acyltransferase activity. Cys-370 can form disulfide bonds with both Cys-230 and Cys-371: formation of a disulfide bond between Cys-230 and Cys-370 facilitates formation of the disulfide between Cys-370 and Cys-371, which promotes inactivation of the acyltransferase activity. May also form interchain disulfids between Cys-230 and Cys-370. Ca(2+) protects against disulfide bond formation and inactivation. Post-translationally, auto-transglutaminated: Forms covalent cross-links mediated by transglutaminase between Gln-636 and the epsilon-amino group of a lysine residue of itself or HMGB1, forming homopolymers and heteropolymers, respectively. S-nitrosylated, leading to inactivation of the acyltransferase activity.

It is found in the cytoplasm. The protein localises to the cytosol. It localises to the nucleus. Its subcellular location is the chromosome. The protein resides in the secreted. It is found in the extracellular space. The protein localises to the extracellular matrix. It localises to the cell membrane. Its subcellular location is the mitochondrion. It carries out the reaction L-glutaminyl-[protein] + L-lysyl-[protein] = [protein]-L-lysyl-N(6)-5-L-glutamyl-[protein] + NH4(+). The catalysed reaction is L-glutaminyl-[protein] + serotonin = 5-serotonyl-L-glutamyl-[protein] + NH4(+). The enzyme catalyses L-glutaminyl-[protein] + dopamine = 5-dopaminyl-L-glutamyl-[protein] + NH4(+). It catalyses the reaction L-glutaminyl-[protein] + histamine = 5-histaminyl-L-glutamyl-[protein] + NH4(+). It carries out the reaction L-glutaminyl-[protein] + (R)-noradrenaline = 5-(R)-noradrenalinyl-L-glutamyl-[protein] + NH4(+). The catalysed reaction is L-glutaminyl-[protein] + H2O = L-glutamyl-[protein] + NH4(+). Its activity is regulated as follows. Acyltransferase activity is regulated by the binding of GTP and Ca(2+): inactivated by GTP, which stabilizes its closed structure, thereby obstructing the accessibility of substrates to the active sites. In contrast, Ca(2+) acts as a cofactor by inducing conformational change to the active open form. In absence of Ca(2+), Mg(2+) may bind Ca(2+)-binding sites, promoting GTP-binding and subsequent inhibition of the acyltransferase activity. Extracellularly reduced and activated by CLIC3. Its function is as follows. Calcium-dependent acyltransferase that catalyzes the formation of covalent bonds between peptide-bound glutamine and various primary amines, such as gamma-amino group of peptide-bound lysine, or mono- and polyamines, thereby producing cross-linked or aminated proteins, respectively. Involved in many biological processes, such as bone development, angiogenesis, wound healing, cellular differentiation, chromatin modification and apoptosis. Acts as a protein-glutamine gamma-glutamyltransferase by mediating the cross-linking of proteins, such as ACO2, HSPB6, FN1, HMGB1, RAP1GDS1, SLC25A4/ANT1, SPP1 and WDR54. Under physiological conditions, the protein cross-linking activity is inhibited by GTP; inhibition is relieved by Ca(2+) in response to various stresses. When secreted, catalyzes cross-linking of proteins of the extracellular matrix, such as FN1 and SPP1 resulting in the formation of scaffolds. Plays a key role during apoptosis, both by (1) promoting the cross-linking of cytoskeletal proteins resulting in condensation of the cytoplasm, and by (2) mediating cross-linking proteins of the extracellular matrix, resulting in the irreversible formation of scaffolds that stabilize the integrity of the dying cells before their clearance by phagocytosis, thereby preventing the leakage of harmful intracellular components. In addition to protein cross-linking, can use different monoamine substrates to catalyze a vast array of protein post-translational modifications: mediates aminylation of serotonin, dopamine, noradrenaline or histamine into glutamine residues of target proteins to generate protein serotonylation, dopaminylation, noradrenalinylation or histaminylation, respectively. Mediates protein serotonylation of small GTPases during activation and aggregation of platelets, leading to constitutive activation of these GTPases. Plays a key role in chromatin organization by mediating serotonylation and dopaminylation of histone H3. Catalyzes serotonylation of 'Gln-5' of histone H3 (H3Q5ser) during serotonergic neuron differentiation, thereby facilitating transcription. Acts as a mediator of neurotransmission-independent role of nuclear dopamine in ventral tegmental area (VTA) neurons: catalyzes dopaminylation of 'Gln-5' of histone H3 (H3Q5dop), thereby regulating relapse-related transcriptional plasticity in the reward system. Regulates vein remodeling by mediating serotonylation and subsequent inactivation of ATP2A2/SERCA2. Also acts as a protein deamidase by mediating the side chain deamidation of specific glutamine residues of proteins to glutamate. Catalyzes specific deamidation of protein gliadin, a component of wheat gluten in the diet. May also act as an isopeptidase cleaving the previously formed cross-links. Also able to participate in signaling pathways independently of its acyltransferase activity: acts as a signal transducer in alpha-1 adrenergic receptor-mediated stimulation of phospholipase C-delta (PLCD) activity and is required for coupling alpha-1 adrenergic agonists to the stimulation of phosphoinositide lipid metabolism. The polypeptide is Protein-glutamine gamma-glutamyltransferase 2 (Cavia cutleri (Guinea pig)).